Consider the following 447-residue polypeptide: Enolase (447 aa).

Q168 provides a ligand contact to (2R)-2-phosphoglycerate. E210 functions as the Proton donor in the catalytic mechanism. 3 residues coordinate Mg(2+): D247, E292, and D319. The (2R)-2-phosphoglycerate site is built by K344, R373, S374, and K395. The Proton acceptor role is filled by K344.

The protein belongs to the enolase family. As to quaternary structure, component of the RNA degradosome, a multiprotein complex involved in RNA processing and mRNA degradation. Requires Mg(2+) as cofactor.

The protein localises to the cytoplasm. The protein resides in the secreted. Its subcellular location is the cell surface. The catalysed reaction is (2R)-2-phosphoglycerate = phosphoenolpyruvate + H2O. The protein operates within carbohydrate degradation; glycolysis; pyruvate from D-glyceraldehyde 3-phosphate: step 4/5. Its function is as follows. Catalyzes the reversible conversion of 2-phosphoglycerate (2-PG) into phosphoenolpyruvate (PEP). It is essential for the degradation of carbohydrates via glycolysis. This Blochmanniella floridana protein is Enolase.